The sequence spans 213 residues: Neuroligin-4, X-linked (213 aa).

The tract at residues 1 to 56 (FQYVSTTTKVPPPDMTSFPYGTRRSPAKIWPTTKRPAITPANNPKHSKDPHKTGPE) is disordered. Over 1 to 73 (FQYVSTTTKV…TKRDYSTELS (73 aa)) the chain is Extracellular. A compositionally biased stretch (basic and acidic residues) spans 46-55 (HSKDPHKTGP). A helical membrane pass occupies residues 74-94 (VTIAVGASLLFLNILAFAALY). At 95–213 (YKKDKRRHET…LPHGHSTTRV (119 aa)) the chain is on the cytoplasmic side. Serine 109 is modified (phosphoserine).

Belongs to the type-B carboxylesterase/lipase family. In terms of assembly, homodimer. Interacts with NRXN1 in a calcium-dependent manner. Interaction with neurexins is mediated by heparan sulfate glycan modification on neurexin. Interacts through its C-terminus with DLG4/PSD-95 third PDZ domain.

It localises to the cell membrane. Its subcellular location is the postsynaptic density membrane. Functionally, cell surface protein involved in cell-cell-interactions via its interactions with neurexin family members. The polypeptide is Neuroligin-4, X-linked (NLGN4X) (Macaca mulatta (Rhesus macaque)).